The following is a 179-amino-acid chain: Large ribosomal subunit protein uL6 (179 aa).

Belongs to the universal ribosomal protein uL6 family. Part of the 50S ribosomal subunit.

This protein binds to the 23S rRNA, and is important in its secondary structure. It is located near the subunit interface in the base of the L7/L12 stalk, and near the tRNA binding site of the peptidyltransferase center. The sequence is that of Large ribosomal subunit protein uL6 from Prochlorococcus marinus (strain MIT 9313).